The primary structure comprises 258 residues: Regulatory protein RecX (258 aa).

This sequence belongs to the RecX family.

It is found in the cytoplasm. Functionally, modulates RecA activity. This Streptococcus thermophilus (strain CNRZ 1066) protein is Regulatory protein RecX.